Reading from the N-terminus, the 72-residue chain is Thiostrepton (72 aa).

The propeptide occupies 1–55 (MDATAIHERWSVMSNASIGQEIGVEGLTGLDVDALEISDYVDETLLDGEDLTVTM). The 4-(1-hydroxyethyl)-7-isoleucino-2-(threonin-O3-ylcarbonyl)-7,8-dihydroquinolin-8-ol (Ile-Thr) cross-link spans 56 to 67 (IASASCTTCICT). Ser-58 is modified (2,3-didehydroalanine (Ser)). The thiazole-4-carboxylic acid (Ser-Cys) cross-link spans 60-61 (SC). A cross-link (5-amino-piperideine-2,5-dicarboxylic acid (Ser-Cys) (with S-69)) is located at residues 60–68 (SCTTCICTC). Positions 60-69 (SCTTCICTCS) form a cross-link, 5-amino-piperideine-2,5-dicarboxylic acid (Ser-Ser) (with C-68). Thr-63 bears the (Z)-2,3-didehydrobutyrine mark. A cross-link ((4S)-thiazoline-4-carboxylic acid (Thr-Cys)) is located at residues 63-64 (TC). The residue at position 65 (Ile-65) is a (3S,4R)-3,4-dihydroxyisoleucine. The thiazole-4-carboxylic acid (Ile-Cys) cross-link spans 65 to 66 (IC). Residues 67-68 (TC) constitute a cross-link (thiazole-4-carboxylic acid (Thr-Cys)). The segment at residues 69-70 (SC) is a cross-link (thiazole-4-carboxylic acid (Ser-Cys)). Residues Ser-71 and Ser-72 each carry the 2,3-didehydroalanine (Ser) modification. Ser-72 is modified (serine amide).

The protein belongs to the thiocillin family. In terms of processing, maturation of thiazole and oxazole containing antibiotics involves the enzymatic condensation of a Cys, Ser or Thr with the alpha-carbonyl of the preceding amino acid to form a thioether or ether bond, then dehydration to form a double bond with the alpha-amino nitrogen. Thiazoline or oxazoline ring are dehydrogenated to form thiazole or oxazole rings. Maturation of pyridinyl containing antibiotics involves the cross-linking of a Ser and a Cys-Ser pair usually separated by 7 or 8 residues along the peptide chain. The Ser residues are dehydrated to didehydroalanines, then bonded between their beta carbons. The alpha carbonyl of the Cys condenses with alpha carbon of the first Ser to form a pyridinyl ring. The ring may be multiply dehydrogenated to form a pyridine ring with loss of the amino nitrogen of the first Ser. Post-translationally, the amidation of Ser-72 probably does not occur by the same mechanism, oxidative cleavage of glycine, as in eukaryotes. In terms of processing, the structure of the 2,3-didehydrobutyrin is shown to be Z-isomer.

It localises to the secreted. Its function is as follows. Has bacteriocidal activity. Inhibits bacterial protein biosynthesis by acting on the elongation factor Tu (EF-Tu). In Streptomyces azureus, this protein is Thiostrepton (tpdA).